A 596-amino-acid chain; its full sequence is Succinate dehydrogenase flavoprotein subunit (596 aa).

FAD is bound by residues 18-23, 41-56, and D225; these read GAGGAG and TKLF…AQGG. H49 is subject to Tele-8alpha-FAD histidine. Substrate is bound by residues H246 and T258. R290 acts as the Proton acceptor in catalysis. H357 contacts substrate. E391 is a binding site for FAD. R402 is a substrate binding site. 407-408 is a binding site for FAD; the sequence is SL.

The protein belongs to the FAD-dependent oxidoreductase 2 family. FRD/SDH subfamily. In terms of assembly, part of an enzyme complex containing four subunits: a flavoprotein, an iron-sulfur, cytochrome b-556, and a hydrophobic anchor protein. FAD is required as a cofactor.

It localises to the cell inner membrane. It carries out the reaction a quinone + succinate = fumarate + a quinol. It participates in carbohydrate metabolism; tricarboxylic acid cycle; fumarate from succinate (bacterial route): step 1/1. This Rickettsia conorii (strain ATCC VR-613 / Malish 7) protein is Succinate dehydrogenase flavoprotein subunit (sdhA).